The sequence spans 234 residues: Probable ascorbate-specific transmembrane electron transporter 1 (234 aa).

Residues 1-9 (MGLGVRAAP) are Cytoplasmic-facing. A helical membrane pass occupies residues 10-30 (FTYVAHALAVAAATMVLVWCI). The Cytochrome b561 domain maps to 13–217 (VAHALAVAAA…FGASVVVAAV (205 aa)). Over 31–48 (HFRGGLAFEATNKNLIFN) the chain is Extracellular. Residues 49-69 (VHPVLMLIGYIILGSEAIMVY) traverse the membrane as a helical segment. Position 50 (H50) interacts with heme b. Position 65–73 (65–73 (AIMVYKVLP)) interacts with L-ascorbate. Residues 70-82 (KVLPTWKHDTTKL) are Cytoplasmic-facing. A helical membrane pass occupies residues 83-103 (IHLILHAIALVFGAVGIYCAF). Positions 84 and 118 each coordinate heme b. At 104–121 (KFHNESGIANLYSLHSWL) the chain is on the extracellular side. 114–123 (LYSLHSWLGI) is a binding site for monodehydro-L-ascorbate radical. Residues 122–142 (GIGTICLYGIQWIFGFVAFFF) form a helical membrane-spanning segment. Topologically, residues 143-151 (PRASPSVRK) are cytoplasmic. The helical transmembrane segment at 152–172 (GVLPWHILFGLFVYILALATA) threads the bilayer. A heme b-binding site is contributed by H157. Residues 173 to 194 (ELGFLEKLTFLQSSGLDKYGAE) lie on the Extracellular side of the membrane. Residues 195–215 (AFLVNFTALIVVLFGASVVVA) traverse the membrane as a helical segment. The Cytoplasmic segment spans residues 216–234 (AVSPARVEEPHEYAPIPES).

Heme b is required as a cofactor.

Its subcellular location is the membrane. Functionally, two-heme-containing cytochrome. Catalyzes ascorbate-dependent trans-membrane electron transfer by utilizing a concerted H(+)/e(-) transfer mechanism. The chain is Probable ascorbate-specific transmembrane electron transporter 1 from Oryza sativa subsp. japonica (Rice).